Here is a 328-residue protein sequence, read N- to C-terminus: Sin3 histone deacetylase corepressor complex component SDS3 (328 aa).

Residues 1-16 are compositionally biased toward low complexity; sequence MSAAGLLAPAPAQAGA. Positions 1–65 are disordered; sequence MSAAGLLAPA…DLAKHDEEDY (65 aa). An N-acetylserine modification is found at Ser-2. Positions 2-170 are mediates interaction with USP17L2; it reads SAAGLLAPAP…IENEKLTMEL (169 aa). 2 stretches are compositionally biased toward acidic residues: residues 23 to 37 and 45 to 54; these read YPEEDEELESAEEDE and SDEDTEDASE. Residues Ser-32 and Ser-45 each carry the phosphoserine modification. At Thr-49 the chain carries Phosphothreonine. Phosphoserine is present on Ser-53. The span at 56–65 shows a compositional bias: basic and acidic residues; it reads DLAKHDEEDY. The stretch at 66–171 forms a coiled coil; the sequence is VEMKEQMYQD…ENEKLTMELT (106 aa). Glycyl lysine isopeptide (Lys-Gly) (interchain with G-Cter in SUMO2) cross-links involve residues Lys-69, Lys-178, and Lys-201. Residues 188–226 are sin3 interaction domain (SID); sequence RPNDPVPIPDKRRKPAPAQLNYLLTDEQIMEDLRTLNKL. A disordered region spans residues 226-252; it reads LKSPKRPASPSSPEHLPATPAESPAQR. Phosphoserine is present on residues Ser-228, Ser-234, and Ser-237. Residue Thr-244 is modified to Phosphothreonine.

This sequence belongs to the SDS3 family. In terms of assembly, interacts with HCFC1. Homodimer. Component of the SIN3 histone deacetylase (HDAC) corepressor complex. Interacts with SIN3A. Interaction with SIN3B enhances the interaction between SIN3B and HDAC1 to form a complex. Component of a mSin3A corepressor complex that contains SIN3A, SAP130, SUDS3/SAP45, ARID4B/SAP180, HDAC1 and HDAC2. Interacts with USP17L2; the interaction is direct. Interacts with FOXK2. In terms of processing, polyubiquitinated. 'Lys-63'-polyubiquitinated SUDS3 positively regulates histone deacetylation. Regulated through deubiquitination by USP17L2/USP17 that cleaves 'Lys-63'-linked ubiquitin chains.

It is found in the nucleus. In terms of biological role, regulatory protein which represses transcription and augments histone deacetylase activity of HDAC1. May have a potential role in tumor suppressor pathways through regulation of apoptosis. May function in the assembly and/or enzymatic activity of the mSin3A corepressor complex or in mediating interactions between the complex and other regulatory complexes. This is Sin3 histone deacetylase corepressor complex component SDS3 (SUDS3) from Pongo abelii (Sumatran orangutan).